Here is a 236-residue protein sequence, read N- to C-terminus: MTRRYWNINLEEMMEAGVHFGHGTRKWDPRMAPYISAKRKGIHITNLTRTARFLSEACDLVFDAASRGKHFLIVGTKDKAADSVASAAIRARCHYVNKKWLGGMSTNWSTTETRLQKFRDLRVRAEMGQFSRLPKRDAAILKRQLSHFQTYLGGIKYMTGLPDIVIIIDQQEEYTALRECVTLGIPTICLIDTNCDPDLADIPIPANDDAIASIRLILNKLVSAICQGRSSYIRSR.

The protein belongs to the universal ribosomal protein uS2 family.

The protein localises to the plastid. The protein resides in the chloroplast. The protein is Small ribosomal subunit protein uS2c (rps2) of Nymphaea alba (White water-lily).